The sequence spans 216 residues: Adenylate kinase (216 aa).

Residue 10–15 coordinates ATP; the sequence is GAGKGT. The tract at residues 30 to 59 is NMP; the sequence is STGDMLRAAVKAETPVGLKAKAVMEAGQLV. AMP-binding positions include Thr31, Arg36, 57–59, 85–88, and Gln92; these read QLV and GYPR. Positions 126-164 are LID; it reads GRYTCATCGKGYHDKFEKPAVEGTCDKCGGHEFKRRPDD. Arg127 contacts ATP. Zn(2+)-binding residues include Cys130, Cys133, Cys150, and Cys153. AMP-binding residues include Arg161 and Arg172. Ala200 contacts ATP.

Belongs to the adenylate kinase family. As to quaternary structure, monomer.

The protein resides in the cytoplasm. The enzyme catalyses AMP + ATP = 2 ADP. It functions in the pathway purine metabolism; AMP biosynthesis via salvage pathway; AMP from ADP: step 1/1. Functionally, catalyzes the reversible transfer of the terminal phosphate group between ATP and AMP. Plays an important role in cellular energy homeostasis and in adenine nucleotide metabolism. The chain is Adenylate kinase from Novosphingobium aromaticivorans (strain ATCC 700278 / DSM 12444 / CCUG 56034 / CIP 105152 / NBRC 16084 / F199).